We begin with the raw amino-acid sequence, 676 residues long: Potassium-transporting ATPase ATP-binding subunit (676 aa).

The next 4 membrane-spanning stretches (helical) occupy residues 24–44 (NPVMFVVYLGALITTILCFYP), 45–65 (MGIPLWFNISITIFLWLTLLF), 212–232 (IFLITLTIIFLTVSITLVPFT), and 246–266 (SLVIVIALLICLAPTTIGALI). Aspartate 302 (4-aspartylphosphate intermediate) is an active-site residue. ATP contacts are provided by residues aspartate 339, glutamate 343, 372 to 379 (FSAKTRMS), and lysine 390. 2 residues coordinate Mg(2+): aspartate 513 and aspartate 517. The next 3 membrane-spanning stretches (helical) occupy residues 573 to 593 (FSIANDIAKYFAVIPVLFYSI), 611 to 631 (AILSAVIYNAVVIVALIPLAL), and 656 to 676 (GIIAPFIFIKIIDLILSLIIL).

Belongs to the cation transport ATPase (P-type) (TC 3.A.3) family. Type IA subfamily. As to quaternary structure, the system is composed of three essential subunits: KdpA, KdpB and KdpC.

It localises to the cell membrane. The catalysed reaction is K(+)(out) + ATP + H2O = K(+)(in) + ADP + phosphate + H(+). In terms of biological role, part of the high-affinity ATP-driven potassium transport (or Kdp) system, which catalyzes the hydrolysis of ATP coupled with the electrogenic transport of potassium into the cytoplasm. This subunit is responsible for energy coupling to the transport system and for the release of the potassium ions to the cytoplasm. The polypeptide is Potassium-transporting ATPase ATP-binding subunit (Enterococcus faecalis (strain ATCC 700802 / V583)).